The chain runs to 179 residues: Large ribosomal subunit protein uL5 (179 aa).

It belongs to the universal ribosomal protein uL5 family. As to quaternary structure, part of the 50S ribosomal subunit; part of the 5S rRNA/L5/L18/L25 subcomplex. Contacts the 5S rRNA and the P site tRNA. Forms a bridge to the 30S subunit in the 70S ribosome.

This is one of the proteins that bind and probably mediate the attachment of the 5S RNA into the large ribosomal subunit, where it forms part of the central protuberance. In the 70S ribosome it contacts protein S13 of the 30S subunit (bridge B1b), connecting the 2 subunits; this bridge is implicated in subunit movement. Contacts the P site tRNA; the 5S rRNA and some of its associated proteins might help stabilize positioning of ribosome-bound tRNAs. The polypeptide is Large ribosomal subunit protein uL5 (Alkaliphilus metalliredigens (strain QYMF)).